A 287-amino-acid polypeptide reads, in one-letter code: Pyridoxal kinase PdxY (287 aa).

Residues Ser9 and 44-45 (MQ) contribute to the substrate site. 4 residues coordinate ATP: Asp111, Ala142, Glu147, and Lys180. Asp221 contributes to the substrate binding site.

It belongs to the pyridoxine kinase family. PdxY subfamily. Homodimer. It depends on Mg(2+) as a cofactor.

It carries out the reaction pyridoxal + ATP = pyridoxal 5'-phosphate + ADP + H(+). Its pathway is cofactor metabolism; pyridoxal 5'-phosphate salvage; pyridoxal 5'-phosphate from pyridoxal: step 1/1. Pyridoxal kinase involved in the salvage pathway of pyridoxal 5'-phosphate (PLP). Catalyzes the phosphorylation of pyridoxal to PLP. The chain is Pyridoxal kinase PdxY from Burkholderia thailandensis (strain ATCC 700388 / DSM 13276 / CCUG 48851 / CIP 106301 / E264).